Consider the following 165-residue polypeptide: Chorismate pyruvate-lyase (165 aa).

The substrate site is built by M35, R77, L115, and E156.

Belongs to the UbiC family. Monomer.

The protein localises to the cytoplasm. It carries out the reaction chorismate = 4-hydroxybenzoate + pyruvate. The protein operates within cofactor biosynthesis; ubiquinone biosynthesis. Functionally, removes the pyruvyl group from chorismate, with concomitant aromatization of the ring, to provide 4-hydroxybenzoate (4HB) for the ubiquinone pathway. This Shigella sonnei (strain Ss046) protein is Chorismate pyruvate-lyase.